Here is an 84-residue protein sequence, read N- to C-terminus: UPF0457 protein BC_3525 (84 aa).

It belongs to the UPF0457 family.

The polypeptide is UPF0457 protein BC_3525 (Bacillus cereus (strain ATCC 14579 / DSM 31 / CCUG 7414 / JCM 2152 / NBRC 15305 / NCIMB 9373 / NCTC 2599 / NRRL B-3711)).